Here is an 85-residue protein sequence, read N- to C-terminus: uncharacterized protein (85 aa).

Positions 64–76 (DPPVRRSGGREQH) are enriched in basic and acidic residues. The interval 64–85 (DPPVRRSGGREQHLAQVWRATS) is disordered.

This is an uncharacterized protein from Mycobacterium bovis (strain ATCC BAA-935 / AF2122/97).